The sequence spans 262 residues: MLTLYGETFPSRLLLGTAAYPTPEILKQSVRTARPAMITVSLRRTGCGGEAHGQGFWSLLQETGVPVLPNTAGCQSVQEAVTTAQMAREVFETDWIKLELIGDDDTLQPDVFQLVEAAEILIKDGFKVLPYCTEDLIACRRLLDAGCQALMPWAAPIGTGLGAVHAYALKILRERLPDTPLIIDAGLGLPSQAAQVMEWGFDGVLLNTAVSRSGDPVNMARAFALAVESGRLAFEAGPVEARTKAQASTPTVGQPFWHSAEY.

K97 functions as the Schiff-base intermediate with DXP in the catalytic mechanism. Residues G158, 185–186, and 207–208 each bind 1-deoxy-D-xylulose 5-phosphate; these read AG and NT.

Belongs to the ThiG family. In terms of assembly, homotetramer. Forms heterodimers with either ThiH or ThiS.

It localises to the cytoplasm. The catalysed reaction is [ThiS sulfur-carrier protein]-C-terminal-Gly-aminoethanethioate + 2-iminoacetate + 1-deoxy-D-xylulose 5-phosphate = [ThiS sulfur-carrier protein]-C-terminal Gly-Gly + 2-[(2R,5Z)-2-carboxy-4-methylthiazol-5(2H)-ylidene]ethyl phosphate + 2 H2O + H(+). It functions in the pathway cofactor biosynthesis; thiamine diphosphate biosynthesis. In terms of biological role, catalyzes the rearrangement of 1-deoxy-D-xylulose 5-phosphate (DXP) to produce the thiazole phosphate moiety of thiamine. Sulfur is provided by the thiocarboxylate moiety of the carrier protein ThiS. In vitro, sulfur can be provided by H(2)S. The polypeptide is Thiazole synthase (Neisseria gonorrhoeae (strain ATCC 700825 / FA 1090)).